Consider the following 528-residue polypeptide: ADP,ATP carrier protein 1 (528 aa).

The next 12 membrane-spanning stretches (helical) occupy residues 24–44 (LKKV…YTIL), 63–83 (IPFI…LIYA), 93–113 (ALFF…PVVI), 124–144 (AFAD…IAML), 149–169 (FAVF…LMFW), 184–204 (FYAL…PAII), 220–240 (WGVS…IIAA), 284–304 (YMLL…LVEV), 327–347 (FSFW…GNVI), 356–376 (ALVT…LVIF), 381–401 (TGLV…VGAI), and 463–483 (IGAM…VWLT).

It belongs to the ADP/ATP translocase tlc family.

Its subcellular location is the cell membrane. The chain is ADP,ATP carrier protein 1 (tlcA) from Chlamydia trachomatis serovar D (strain ATCC VR-885 / DSM 19411 / UW-3/Cx).